Here is a 151-residue protein sequence, read N- to C-terminus: Leukocyte cell-derived chemotaxin-2 (151 aa).

A signal peptide spans 1–18 (MIPTTILISAALLSSALA). Intrachain disulfides connect Cys-25–Cys-60, Cys-36–Cys-41, and Cys-99–Cys-142. Zn(2+) is bound by residues His-53, Asp-57, and His-138.

Belongs to the LECT2/MIM-1 family. Highly expressed in liver and weakly in testis. Not expressed in heart, brain, spleen, lung, skeletal muscle and kidney.

It is found in the secreted. Has a neutrophil chemotactic activity. Also a positive regulator of chondrocyte proliferation. This Mus musculus (Mouse) protein is Leukocyte cell-derived chemotaxin-2 (Lect2).